A 704-amino-acid polypeptide reads, in one-letter code: Elongation factor G (704 aa).

The tr-type G domain occupies 10-290; sequence TKVRNIGIMA…AVVDYLPSPL (281 aa). GTP is bound by residues 19-26, 83-87, and 137-140; these read AHIDAGKT, DTPGH, and NKMD.

Belongs to the TRAFAC class translation factor GTPase superfamily. Classic translation factor GTPase family. EF-G/EF-2 subfamily.

It localises to the cytoplasm. Catalyzes the GTP-dependent ribosomal translocation step during translation elongation. During this step, the ribosome changes from the pre-translocational (PRE) to the post-translocational (POST) state as the newly formed A-site-bound peptidyl-tRNA and P-site-bound deacylated tRNA move to the P and E sites, respectively. Catalyzes the coordinated movement of the two tRNA molecules, the mRNA and conformational changes in the ribosome. This Beutenbergia cavernae (strain ATCC BAA-8 / DSM 12333 / CCUG 43141 / JCM 11478 / NBRC 16432 / NCIMB 13614 / HKI 0122) protein is Elongation factor G.